Consider the following 189-residue polypeptide: Movement protein (189 aa).

The protein belongs to the tombusvirus/aureusvirus movement protein p22 family. Interacts with host protein HFI22. Post-translationally, phosphorylated.

It localises to the host membrane. Its function is as follows. Transports viral genome to neighboring plant cells directly through plasmosdesmata, without any budding. The movement protein allows efficient cell to cell propagation, by bypassing the host cell wall barrier. This is Movement protein from Tomato bushy stunt virus (strain BS-3) (TBSV).